Consider the following 134-residue polypeptide: D-ribose pyranase (134 aa).

The active-site Proton donor is histidine 20. Residues aspartate 28, histidine 101, and 123–125 (YCN) each bind substrate.

The protein belongs to the RbsD / FucU family. RbsD subfamily. As to quaternary structure, homodecamer.

The protein localises to the cytoplasm. The catalysed reaction is beta-D-ribopyranose = beta-D-ribofuranose. It participates in carbohydrate metabolism; D-ribose degradation; D-ribose 5-phosphate from beta-D-ribopyranose: step 1/2. In terms of biological role, catalyzes the interconversion of beta-pyran and beta-furan forms of D-ribose. The protein is D-ribose pyranase of Pseudomonas fluorescens (strain ATCC BAA-477 / NRRL B-23932 / Pf-5).